The sequence spans 161 residues: Protein-export protein SecB (161 aa).

The protein belongs to the SecB family. Homotetramer, a dimer of dimers. One homotetramer interacts with 1 SecA dimer.

It is found in the cytoplasm. In terms of biological role, one of the proteins required for the normal export of preproteins out of the cell cytoplasm. It is a molecular chaperone that binds to a subset of precursor proteins, maintaining them in a translocation-competent state. It also specifically binds to its receptor SecA. In Shewanella sp. (strain MR-7), this protein is Protein-export protein SecB.